The chain runs to 298 residues: Acetylglutamate kinase (298 aa).

Substrate is bound by residues 69–70 (GG), Arg-91, and Asn-196.

The protein belongs to the acetylglutamate kinase family. ArgB subfamily.

It localises to the cytoplasm. It carries out the reaction N-acetyl-L-glutamate + ATP = N-acetyl-L-glutamyl 5-phosphate + ADP. It functions in the pathway amino-acid biosynthesis; L-arginine biosynthesis; N(2)-acetyl-L-ornithine from L-glutamate: step 2/4. In terms of biological role, catalyzes the ATP-dependent phosphorylation of N-acetyl-L-glutamate. This is Acetylglutamate kinase from Nitrobacter winogradskyi (strain ATCC 25391 / DSM 10237 / CIP 104748 / NCIMB 11846 / Nb-255).